A 268-amino-acid chain; its full sequence is Phosphatidylglycerol--prolipoprotein diacylglyceryl transferase (268 aa).

A run of 3 helical transmembrane segments spans residues 16–36, 56–76, and 92–112; these read FITLRWYGLLIAVAVFIGIWL, IWLVVAAIPAARLYYVAFNWG, and GIAIHGAILGGIVAMAIFTYV. Position 136 (arginine 136) interacts with a 1,2-diacyl-sn-glycero-3-phospho-(1'-sn-glycerol). A run of 3 helical transmembrane segments spans residues 175-195, 204-224, and 236-256; these read PTFLYESLWNVGVFLLLLWLF, GTLLMVYAIAYSLGRFWIEGL, and IAQVVSLVAIALGSWGLFRLY.

This sequence belongs to the Lgt family.

The protein resides in the cell inner membrane. The catalysed reaction is L-cysteinyl-[prolipoprotein] + a 1,2-diacyl-sn-glycero-3-phospho-(1'-sn-glycerol) = an S-1,2-diacyl-sn-glyceryl-L-cysteinyl-[prolipoprotein] + sn-glycerol 1-phosphate + H(+). Its pathway is protein modification; lipoprotein biosynthesis (diacylglyceryl transfer). Functionally, catalyzes the transfer of the diacylglyceryl group from phosphatidylglycerol to the sulfhydryl group of the N-terminal cysteine of a prolipoprotein, the first step in the formation of mature lipoproteins. The chain is Phosphatidylglycerol--prolipoprotein diacylglyceryl transferase from Thermosynechococcus vestitus (strain NIES-2133 / IAM M-273 / BP-1).